The following is a 328-amino-acid chain: Ribosomal RNA small subunit methyltransferase H (328 aa).

Residues 37–39 (GGH), Asp-57, Phe-83, Asp-104, and Gln-111 each bind S-adenosyl-L-methionine.

Belongs to the methyltransferase superfamily. RsmH family.

It is found in the cytoplasm. It carries out the reaction cytidine(1402) in 16S rRNA + S-adenosyl-L-methionine = N(4)-methylcytidine(1402) in 16S rRNA + S-adenosyl-L-homocysteine + H(+). Specifically methylates the N4 position of cytidine in position 1402 (C1402) of 16S rRNA. In Neisseria meningitidis serogroup C / serotype 2a (strain ATCC 700532 / DSM 15464 / FAM18), this protein is Ribosomal RNA small subunit methyltransferase H.